A 1012-amino-acid chain; its full sequence is MSLPKTPSTPLNSTSTSESKKLKVSVAKEGTRGLPELKEKKNMVDRSKLLPTSLQNEFIPKEVLLSLTYAANAGPCPENLLPPKKIKTPKGTLPRLVDHVWHHPVRRNKFKYLIDHPVSLTGAGRDISFLYDVTYAKGQTREKAVCPPHLARSLQSHDGVIVPHKPKTLTDTLIPEEFHIVSSTGVSGLECYDDKYTTLLTDSENRLLLFPSMKPNKRVEVAQLNDVMDTMLERAGVENQEYTGPTKMHKLLHILKKEQTIYNMIFHELIRQVSVDCADRGELLSKVRERYVQMLDQIARQMIDFYKDLVTQRVMDQRILEELYNFKHVIEELTRELCLVRAHDVKLTKETEKAHKDLAQALLNAEKNAKIVEEYHDLYTLQRERMENDMKKLVAERDIWSSATYELALKVIERNRVILARRLYLNEKGWNKYTKHFIILLSNKDTEDLALLQKLTQKWRNLVNKLKQEVEQMEESTSETLKIVKDGLIKWQEFFNEKDILSPNKGNIFNSVLLDFKQWQKILNEKKEEFTGDVLLSKYDTLKIIKHLQENWADIGLGIFNRHKSLEGEMPSERQYMEEIIKNIQKLYKEYEIRINGDNGYSKILPSLISSLDFCSFKLENLEFPDTPLEEWQEIDEKINEMKSHLDILLNLTGIVPQHIDVDSVSVLQAYIFNMIQQWLLKIGNEINNGNIELQHHMDELHISMIQWMVNLLILMIPNFTDQDCLLKLEEESAEKHDIGVARLELDAIELTRKLYQYSSYLSSCCKGMVTAMALSKSTNSHKNATEDLYEVDKLKKECYEWINTCSCLLSNIKGRKITLLTYEEIERLLEEEAVKEFIEPEIDESFKEDEEESKEDRKLQEENKERAEEQPSTSTEKEKLIRFIGEDENVHSKPLFETDVLSSWRESAKQGTLAQKYLEAMAVIEHMQEKLLEVENRARQAEEKFEDAYEKLHHTLIKNKDLEELVMTSRKESKEEKENQDEREVKEEEEQQEEEEVRSAENSSKSPKKGH.

Low complexity predominate over residues 1 to 17; sequence MSLPKTPSTPLNSTSTS. The disordered stretch occupies residues 1 to 34; sequence MSLPKTPSTPLNSTSTSESKKLKVSVAKEGTRGL. Coiled-coil stretches lie at residues 317–402, 447–486, and 572–597; these read QRIL…IWSS, EDLALLQKLTQKWRNLVNKLKQEVEQMEESTSETLKIVKD, and SERQYMEEIIKNIQKLYKEYEIRING. Positions 841-854 are enriched in acidic residues; sequence PEIDESFKEDEEES. Disordered stretches follow at residues 841-879 and 963-1012; these read PEIDESFKEDEEESKEDRKLQEENKERAEEQPSTSTEKE and LEEL…KKGH. 2 stretches are compositionally biased toward basic and acidic residues: residues 855-879 and 963-987; these read KEDRKLQEENKERAEEQPSTSTEKE and LEELVMTSRKESKEEKENQDEREVK. Acidic residues predominate over residues 988-997; the sequence is EEEEQQEEEE.

Highly expressed in testis. Highly expressed in the round and late spermatids.

The protein localises to the cytoplasm. May be essential for spermiogenesis and male fertility probably by regulating the manchette dynamics, spermatid head shaping and sperm flagellum assembly. This chain is Axonemal dynein light chain domain-containing protein 1, found in Homo sapiens (Human).